A 307-amino-acid chain; its full sequence is E3 ubiquitin-protein ligase PHF7 (307 aa).

The C2HC pre-PHD-type zinc finger occupies 30 to 68 (SPVCLLCLQEPGDPEKLGEFLQKDNLCVHYFCLILSSRL). Zn(2+) contacts are provided by Cys-33, Cys-36, His-58, and Cys-61. The segment at 67–92 (RLPQKGQPNRGLHGFMPEDIKREAVR) is required for interaction and ubiquitination of the nucleosome core particle. Residues 96–145 (KICFVCKKKGAAIRCQNDQCVQNFHLPCGQERGCLSQFFGEYKSYCRKHR) form a PHD-type zinc finger. 24 residues coordinate Zn(2+): Cys-98, Cys-101, Cys-110, Cys-115, His-120, Cys-123, Cys-141, His-144, Cys-160, Cys-163, Cys-179, Cys-180, His-186, Cys-189, Cys-204, Cys-207, Cys-248, Cys-253, Cys-273, Cys-276, His-282, Cys-285, Cys-297, and Cys-300. The interval 150-307 (IHQGSLGEES…NECLPASTTS (158 aa)) is required for interaction with ubiquitinated UBE2D2. Residues 160–208 (CVLCCENLSRTSVENIQSPCCSQAIYHRKCIQKYAHTSAKHFFKCPQCN) form an RING-type; degenerate zinc finger. Positions 244–301 (RYRHCDAPICLYEQGRDSFEDEGRWRLILCATCGSHGTHRDCSSLRPNSKKWECNECL) are required for association with and ubiquitination of H3.

In terms of assembly, interacts with MEF2C; the interaction promotes MEF2C binding to its transcription targets. Interacts with GATA4; the interaction promotes GATA4 binding to its transcription targets. Interacts with UBE2D2; the interaction inhibits cleavage of PHF7 and promotes association of the complex with the nucleosome core particle. As to expression, expressed in Leydig cells and in developing spermatids (at protein level). Highly expressed in Sertoli cells in testis.

The protein localises to the nucleus. The enzyme catalyses S-ubiquitinyl-[E2 ubiquitin-conjugating enzyme]-L-cysteine + [acceptor protein]-L-lysine = [E2 ubiquitin-conjugating enzyme]-L-cysteine + N(6)-ubiquitinyl-[acceptor protein]-L-lysine.. The protein operates within protein modification; protein ubiquitination. In terms of biological role, E3 ubiquitin-protein ligase which ubiquitinates histone H3 at 'Lys-14'. Required for male fertility, via inhibition of SPOP-mediated BRDT degradation when in the presence of acetylated histone H4 in early condensing spermatids. Stabilization of BRDT allows it to facilitate histone removal in early condensing spermatids and promote the progression of histone-to-protamine exchange. Promotes the expression of steroidogenesis proteins in the testes, and as a result plays a role in maintaining testosterone levels and repressing osteoclastogenesis. Promotes transcription of cardiac enhancer genes by facilitating binding of cardiac transcription factors such as MEF2C and GATA4 to target gene promoters. Ubiquitinates histone H4. Ubiquitinates histone H2A and H3 as part of the nucleosome core particle. The protein is E3 ubiquitin-protein ligase PHF7 of Mus musculus (Mouse).